Consider the following 342-residue polypeptide: Heat-inducible transcription repressor HrcA (342 aa).

This sequence belongs to the HrcA family.

Its function is as follows. Negative regulator of class I heat shock genes (grpE-dnaK-dnaJ and groELS operons). Prevents heat-shock induction of these operons. The sequence is that of Heat-inducible transcription repressor HrcA from Leptospira interrogans serogroup Icterohaemorrhagiae serovar copenhageni (strain Fiocruz L1-130).